A 273-amino-acid polypeptide reads, in one-letter code: DNA replication complex GINS protein psf2 (273 aa).

Disordered stretches follow at residues 88–110 (KEDP…SQPG) and 240–273 (ASAE…DMGL). The span at 244–257 (ATRREEEEEARRGG) shows a compositional bias: basic and acidic residues. Positions 261-273 (GDGDEDSDEDMGL) are enriched in acidic residues.

Belongs to the GINS2/PSF2 family. As to quaternary structure, component of the GINS complex which is a heterotetramer of div-26/sld5, drc-1/psf1, drc-2/psf2 and drc-3/psf3.

The protein localises to the nucleus. The GINS complex plays an essential role in the initiation of DNA replication. Has a role in chromosome segregation. This Neurospora crassa (strain ATCC 24698 / 74-OR23-1A / CBS 708.71 / DSM 1257 / FGSC 987) protein is DNA replication complex GINS protein psf2 (drc-2).